We begin with the raw amino-acid sequence, 163 residues long: Superoxide dismutase [Mn] (163 aa).

Positions 2, 50, 134, and 138 each coordinate Mn(2+).

Belongs to the iron/manganese superoxide dismutase family. The cofactor is Mn(2+).

It catalyses the reaction 2 superoxide + 2 H(+) = H2O2 + O2. In terms of biological role, destroys superoxide anion radicals which are normally produced within the cells and which are toxic to biological systems. The polypeptide is Superoxide dismutase [Mn] (sodA) (Mycobacterium scrofulaceum).